The primary structure comprises 105 residues: Large ribosomal subunit protein uL18c (105 aa).

It belongs to the universal ribosomal protein uL18 family. As to quaternary structure, part of the 50S ribosomal subunit; contacts the 5S rRNA.

Its subcellular location is the plastid. It is found in the chloroplast. Its function is as follows. Binds 5S rRNA, forms part of the central protuberance of the 50S subunit. The sequence is that of Large ribosomal subunit protein uL18c (rpl18) from Cyanidium caldarium (Red alga).